A 104-amino-acid chain; its full sequence is Integration host factor subunit beta (104 aa).

This sequence belongs to the bacterial histone-like protein family. In terms of assembly, heterodimer of an alpha and a beta chain.

In terms of biological role, this protein is one of the two subunits of integration host factor, a specific DNA-binding protein that functions in genetic recombination as well as in transcriptional and translational control. This chain is Integration host factor subunit beta, found in Xylella fastidiosa (strain M23).